Reading from the N-terminus, the 277-residue chain is 3-methyl-2-oxobutanoate hydroxymethyltransferase (277 aa).

Mg(2+)-binding residues include aspartate 53 and aspartate 96. 3-methyl-2-oxobutanoate contacts are provided by residues 53–54, aspartate 96, and lysine 126; that span reads DS. Glutamate 128 is a binding site for Mg(2+). Glutamate 195 (proton acceptor) is an active-site residue.

This sequence belongs to the PanB family. In terms of assembly, homodecamer; pentamer of dimers. Mg(2+) is required as a cofactor.

The protein resides in the cytoplasm. The catalysed reaction is 3-methyl-2-oxobutanoate + (6R)-5,10-methylene-5,6,7,8-tetrahydrofolate + H2O = 2-dehydropantoate + (6S)-5,6,7,8-tetrahydrofolate. Its pathway is cofactor biosynthesis; (R)-pantothenate biosynthesis; (R)-pantoate from 3-methyl-2-oxobutanoate: step 1/2. Functionally, catalyzes the reversible reaction in which hydroxymethyl group from 5,10-methylenetetrahydrofolate is transferred onto alpha-ketoisovalerate to form ketopantoate. In Chlorobium phaeobacteroides (strain BS1), this protein is 3-methyl-2-oxobutanoate hydroxymethyltransferase.